A 129-amino-acid polypeptide reads, in one-letter code: Small ribosomal subunit protein uS11 (129 aa).

Belongs to the universal ribosomal protein uS11 family. In terms of assembly, part of the 30S ribosomal subunit. Interacts with proteins S7 and S18. Binds to IF-3.

In terms of biological role, located on the platform of the 30S subunit, it bridges several disparate RNA helices of the 16S rRNA. Forms part of the Shine-Dalgarno cleft in the 70S ribosome. In Jannaschia sp. (strain CCS1), this protein is Small ribosomal subunit protein uS11.